We begin with the raw amino-acid sequence, 625 residues long: Probable receptor-like protein kinase At1g11050 (625 aa).

Residues 1–20 (MPNSILFLLLSFLYLTNCVA) form the signal peptide. Residues 21 to 227 (QSPSQTCPLD…PLNSKKKRHT (207 aa)) lie on the Extracellular side of the membrane. N-linked (GlcNAc...) asparagine glycans are attached at residues N40, N106, N121, and N177. Residues 228-248 (VALALGITGAIFGALVIAGLI) form a helical membrane-spanning segment. Over 249-625 (CLYFRFGKAV…LQIHSGDMLR (377 aa)) the chain is Cytoplasmic. The Protein kinase domain occupies 295–555 (FSQKNFIGRG…NPKGIMERFL (261 aa)). ATP contacts are provided by residues 301–309 (IGRGGFGFV) and K323. D426 (proton acceptor) is an active-site residue.

This sequence belongs to the protein kinase superfamily. Ser/Thr protein kinase family.

It is found in the membrane. It carries out the reaction L-seryl-[protein] + ATP = O-phospho-L-seryl-[protein] + ADP + H(+). It catalyses the reaction L-threonyl-[protein] + ATP = O-phospho-L-threonyl-[protein] + ADP + H(+). The chain is Probable receptor-like protein kinase At1g11050 from Arabidopsis thaliana (Mouse-ear cress).